A 229-amino-acid chain; its full sequence is Cytidylate kinase (229 aa).

12-20 (GPSGTGKSS) provides a ligand contact to ATP.

It belongs to the cytidylate kinase family. Type 1 subfamily.

Its subcellular location is the cytoplasm. It carries out the reaction CMP + ATP = CDP + ADP. It catalyses the reaction dCMP + ATP = dCDP + ADP. This is Cytidylate kinase from Rhodococcus jostii (strain RHA1).